Reading from the N-terminus, the 248-residue chain is Triosephosphate isomerase (248 aa).

9-11 contacts substrate; that stretch reads NWK. The active-site Electrophile is His-95. The active-site Proton acceptor is Glu-166. Substrate contacts are provided by residues Gly-172, Ser-210, and 231-232; that span reads GG.

This sequence belongs to the triosephosphate isomerase family. As to quaternary structure, homodimer.

It is found in the cytoplasm. The enzyme catalyses D-glyceraldehyde 3-phosphate = dihydroxyacetone phosphate. It participates in carbohydrate biosynthesis; gluconeogenesis. Its pathway is carbohydrate degradation; glycolysis; D-glyceraldehyde 3-phosphate from glycerone phosphate: step 1/1. Its function is as follows. Involved in the gluconeogenesis. Catalyzes stereospecifically the conversion of dihydroxyacetone phosphate (DHAP) to D-glyceraldehyde-3-phosphate (G3P). The sequence is that of Triosephosphate isomerase from Delftia acidovorans (strain DSM 14801 / SPH-1).